The chain runs to 388 residues: MSSYIVHRQNITRKEQSTIYWVNVLLSMLTGLLLVAIAWPISWFYHLPQLGGLIMLTSLNFLVLGSLSQYQAHFIKAKRMILLAKIEMVTKFLAFAFTVILLYYSPLGVSAVILGLFANAALRIGCMIWFGDKSWRPTFEFDQGTFYSSLKYGIYQLGSQTINQLRTQADSLIVGKVMGAELLGVYSLAKELILQPLKLVTPVINRLALPRFAEKQHDPVRLQQLFLKGTFVIMLFSAIMYLAIGILSPVIVRVLYGPAHEAVGQLIPLMLLFGMLRPMGGLTGAISQANGRTNVEFYWNVVASIIVVLVLASVWIWPQVEYVALTLSISQVLISVFAHPFFIKPVIGIRFLPYARQWISVSAVFVGIIALVSHYNLFIMPEWFSRWL.

A run of 6 helical transmembrane segments spans residues 24 to 44 (VLLS…ISWF), 47 to 67 (LPQL…LGSL), 97 to 117 (FTVI…LGLF), 231 to 251 (FVIM…SPVI), 297 to 317 (FYWN…VWIW), and 359 to 379 (ISVS…NLFI).

Belongs to the polysaccharide synthase family.

The protein localises to the cell membrane. It functions in the pathway glycan metabolism; exopolysaccharide biosynthesis. In terms of biological role, involved in the biosynthesis of amylovoran which functions as a virulence factor. This is Amylovoran biosynthesis protein AmsL (amsL) from Erwinia amylovora (Fire blight bacteria).